The chain runs to 158 residues: Protein E6 (158 aa).

Zinc fingers lie at residues 32–68 (CVYC…CQKC) and 105–141 (CMSC…CRHC). Positions 156 to 158 (TQV) match the PDZ-binding domain motif.

The protein belongs to the papillomaviridae E6 protein family. As to quaternary structure, forms homodimers. Interacts with ubiquitin-protein ligase UBE3A/E6-AP and thus forms a complex with human TP53. Interacts with human NFX1 and MAGI3. Interacts with human IRF3; this interaction inhibits the establishment of antiviral state. Interacts with human TYK2; this interaction inhibits JAK-STAT activation by interferon alpha. Interacts with host DLG1; this interaction leads to the proteasomal degradation of DLG1.

Its subcellular location is the host cytoplasm. The protein localises to the host nucleus. In terms of biological role, plays a major role in the induction and maintenance of cellular transformation. Acts mainly as an oncoprotein by stimulating the destruction of many host cell key regulatory proteins. E6 associates with host UBE3A/E6-AP ubiquitin-protein ligase, and inactivates tumor suppressors TP53 and TP73 by targeting them to the 26S proteasome for degradation. In turn, DNA damage and chromosomal instabilities increase and lead to cell proliferation and cancer development. The complex E6/E6AP targets several other substrates to degradation via the proteasome including host DLG1 or NFX1, a repressor of human telomerase reverse transcriptase (hTERT). The resulting increased expression of hTERT prevents the shortening of telomere length leading to cell immortalization. Other cellular targets including BAK1, Fas-associated death domain-containing protein (FADD) and procaspase 8, are degraded by E6/E6AP causing inhibition of apoptosis. E6 also inhibits immune response by interacting with host IRF3 and TYK2. These interactions prevent IRF3 transcriptional activities and inhibit TYK2-mediated JAK-STAT activation by interferon alpha resulting in inhibition of the interferon signaling pathway. The chain is Protein E6 from Homo sapiens (Human).